The chain runs to 250 residues: Flagellar L-ring protein (250 aa).

An N-terminal signal peptide occupies residues 1–32 (MTRINTNTQKNNNTKFSKLILGVMVSSIVLSG). The N-palmitoyl cysteine moiety is linked to residue cysteine 33. A lipid anchor (S-diacylglycerol cysteine) is attached at cysteine 33.

Belongs to the FlgH family. The basal body constitutes a major portion of the flagellar organelle and consists of four rings (L,P,S, and M) mounted on a central rod.

The protein resides in the cell outer membrane. Its subcellular location is the bacterial flagellum basal body. Assembles around the rod to form the L-ring and probably protects the motor/basal body from shearing forces during rotation. The polypeptide is Flagellar L-ring protein (Hydrogenovibrio crunogenus (strain DSM 25203 / XCL-2) (Thiomicrospira crunogena)).